The following is a 609-amino-acid chain: Proteasome-associated ATPase (609 aa).

Positions 1–24 are disordered; it reads MADSERSEAFGTPDDTPLSSNDAA. The stretch at 19–96 forms a coiled coil; that stretch reads SSNDAAELEQ…LREEVDRLGQ (78 aa). 296-301 is an ATP binding site; sequence GCGKTL. Residues 608-609 form a docks into pockets in the proteasome alpha-ring region; sequence YL.

The protein belongs to the AAA ATPase family. In terms of assembly, homohexamer. Assembles into a hexameric ring structure that caps the 20S proteasome core. Strongly interacts with the prokaryotic ubiquitin-like protein Pup through a hydrophobic interface; the interacting region of ARC lies in its N-terminal coiled-coil domain. There is one Pup binding site per ARC hexamer ring. Upon ATP-binding, the C-terminus of ARC interacts with the alpha-rings of the proteasome core, possibly by binding to the intersubunit pockets.

The protein operates within protein degradation; proteasomal Pup-dependent pathway. Functionally, ATPase which is responsible for recognizing, binding, unfolding and translocation of pupylated proteins into the bacterial 20S proteasome core particle. May be essential for opening the gate of the 20S proteasome via an interaction with its C-terminus, thereby allowing substrate entry and access to the site of proteolysis. Thus, the C-termini of the proteasomal ATPase may function like a 'key in a lock' to induce gate opening and therefore regulate proteolysis. The protein is Proteasome-associated ATPase of Mycobacterium ulcerans (strain Agy99).